The sequence spans 159 residues: Ribosomal RNA large subunit methyltransferase H (159 aa).

Residues L76, G107, and 126–131 contribute to the S-adenosyl-L-methionine site; that span reads LSKLTM.

The protein belongs to the RNA methyltransferase RlmH family. In terms of assembly, homodimer.

It is found in the cytoplasm. The enzyme catalyses pseudouridine(1915) in 23S rRNA + S-adenosyl-L-methionine = N(3)-methylpseudouridine(1915) in 23S rRNA + S-adenosyl-L-homocysteine + H(+). Specifically methylates the pseudouridine at position 1915 (m3Psi1915) in 23S rRNA. The sequence is that of Ribosomal RNA large subunit methyltransferase H from Acinetobacter baylyi (strain ATCC 33305 / BD413 / ADP1).